A 477-amino-acid polypeptide reads, in one-letter code: P3 protein (477 aa).

Residues 1–21 (MVLMQDKGSSQQWPGLGGEGG) are disordered. 8 consecutive transmembrane segments (helical) span residues 225 to 245 (PMLL…FLMA), 253 to 273 (ALAL…SYLF), 281 to 301 (VTLA…FLPL), 320 to 340 (ISKI…GVLI), 361 to 381 (VLLL…LAGI), 383 to 403 (LPIV…GYCL), 417 to 437 (VSIE…QLSL), and 450 to 470 (FIVA…HFIY).

This sequence belongs to the bile acid:sodium symporter (BASS) (TC 2.A.28) family.

Its subcellular location is the membrane. Functionally, the ubiquitous expression and the conservation of the sequence in distant animal species suggest that the gene codes for a protein with housekeeping functions. The chain is P3 protein (SLC10A3) from Homo sapiens (Human).